The following is a 349-amino-acid chain: Protein RecA (349 aa).

65–72 (GPESSGKT) contacts ATP.

Belongs to the RecA family.

The protein localises to the cytoplasm. Functionally, can catalyze the hydrolysis of ATP in the presence of single-stranded DNA, the ATP-dependent uptake of single-stranded DNA by duplex DNA, and the ATP-dependent hybridization of homologous single-stranded DNAs. It interacts with LexA causing its activation and leading to its autocatalytic cleavage. The sequence is that of Protein RecA from Clostridium acetobutylicum (strain ATCC 824 / DSM 792 / JCM 1419 / IAM 19013 / LMG 5710 / NBRC 13948 / NRRL B-527 / VKM B-1787 / 2291 / W).